The sequence spans 154 residues: 6,7-dimethyl-8-ribityllumazine synthase (154 aa).

5-amino-6-(D-ribitylamino)uracil contacts are provided by residues phenylalanine 26, 60 to 62, and 84 to 86; these read ALE and CII. Position 89–90 (89–90) interacts with (2S)-2-hydroxy-3-oxobutyl phosphate; the sequence is QT. Histidine 92 (proton donor) is an active-site residue. Residue asparagine 117 coordinates 5-amino-6-(D-ribitylamino)uracil. Position 131 (arginine 131) interacts with (2S)-2-hydroxy-3-oxobutyl phosphate.

This sequence belongs to the DMRL synthase family.

The enzyme catalyses (2S)-2-hydroxy-3-oxobutyl phosphate + 5-amino-6-(D-ribitylamino)uracil = 6,7-dimethyl-8-(1-D-ribityl)lumazine + phosphate + 2 H2O + H(+). It participates in cofactor biosynthesis; riboflavin biosynthesis; riboflavin from 2-hydroxy-3-oxobutyl phosphate and 5-amino-6-(D-ribitylamino)uracil: step 1/2. Functionally, catalyzes the formation of 6,7-dimethyl-8-ribityllumazine by condensation of 5-amino-6-(D-ribitylamino)uracil with 3,4-dihydroxy-2-butanone 4-phosphate. This is the penultimate step in the biosynthesis of riboflavin. The polypeptide is 6,7-dimethyl-8-ribityllumazine synthase (Verminephrobacter eiseniae (strain EF01-2)).